Here is a 120-residue protein sequence, read N- to C-terminus: Large ribosomal subunit protein bL19c (120 aa).

The protein belongs to the bacterial ribosomal protein bL19 family.

It is found in the plastid. The protein resides in the chloroplast. This Phaeodactylum tricornutum (strain CCAP 1055/1) protein is Large ribosomal subunit protein bL19c.